Reading from the N-terminus, the 681-residue chain is Nucleolar GTP-binding protein 1 (681 aa).

The 172-residue stretch at 170-341 (RTLILCGFPN…LRDRACDELL (172 aa)) folds into the OBG-type G domain. GTP is bound by residues 176 to 183 (GFPNVGKS), 222 to 226 (DTPGI), and 290 to 293 (NKVD).

Belongs to the TRAFAC class OBG-HflX-like GTPase superfamily. OBG GTPase family. NOG subfamily. Ubiquitously expressed.

The protein resides in the nucleus. It localises to the nucleolus. Involved in the biogenesis of the 60S ribosomal subunit. Has a role in regulating longevity, growth and brood size. May regulate fat storage via the insulin/IGF pathway. This is Nucleolar GTP-binding protein 1 from Caenorhabditis elegans.